The primary structure comprises 156 residues: Small ribosomal subunit protein uS7 (156 aa).

This sequence belongs to the universal ribosomal protein uS7 family. In terms of assembly, part of the 30S ribosomal subunit. Contacts proteins S9 and S11.

Its function is as follows. One of the primary rRNA binding proteins, it binds directly to 16S rRNA where it nucleates assembly of the head domain of the 30S subunit. Is located at the subunit interface close to the decoding center, probably blocks exit of the E-site tRNA. This is Small ribosomal subunit protein uS7 from Mycobacterium leprae (strain TN).